The following is a 353-amino-acid chain: AA9 family lytic polysaccharide monooxygenase A (353 aa).

Residues 1 to 19 form the signal peptide; it reads MKSTFGLLALAAAAKMAHA. Cu(2+) contacts are provided by His-20 and His-102. Cys-62 and Cys-183 are oxidised to a cystine. His-169 lines the O2 pocket. Tyr-180 contributes to the Cu(2+) binding site. Residues 266 to 276 show a composition bias toward low complexity; sequence KPTTTTAAAPA. A disordered region spans residues 266-316; sequence KPTTTTAAAPAETDSCDGDDDDYETETPAPQASATQAPAPQRPAPQTPSGS. The span at 279–290 shows a compositional bias: acidic residues; the sequence is DSCDGDDDDYET. Positions 291-304 are enriched in low complexity; sequence ETPAPQASATQAPA. In terms of domain architecture, CBM1 spans 315–351; the sequence is GSVKEWYQCGGINYTGAKNCESGLVCKEWNPYYHQCI. N-linked (GlcNAc...) asparagine glycosylation occurs at Asn-327.

It belongs to the polysaccharide monooxygenase AA9 family. Requires Cu(2+) as cofactor.

It localises to the secreted. The enzyme catalyses [(1-&gt;4)-beta-D-glucosyl]n+m + reduced acceptor + O2 = 4-dehydro-beta-D-glucosyl-[(1-&gt;4)-beta-D-glucosyl]n-1 + [(1-&gt;4)-beta-D-glucosyl]m + acceptor + H2O.. In terms of biological role, lytic polysaccharide monooxygenase (LPMO) that depolymerizes crystalline and amorphous polysaccharides via the oxidation of scissile alpha- or beta-(1-4)-glycosidic bonds, yielding C4 oxidation products. Catalysis by LPMOs requires the reduction of the active-site copper from Cu(II) to Cu(I) by a reducing agent and H(2)O(2) or O(2) as a cosubstrate. This chain is AA9 family lytic polysaccharide monooxygenase A (eglD), found in Aspergillus clavatus (strain ATCC 1007 / CBS 513.65 / DSM 816 / NCTC 3887 / NRRL 1 / QM 1276 / 107).